A 206-amino-acid polypeptide reads, in one-letter code: Large ribosomal subunit protein uL4 (206 aa).

Positions 43 to 94 (ARSGNRAQKDREQVKHTTKKPWRQKGTGRARAGMSSSPLWRGGGRIFPNSPE) are disordered. A compositionally biased stretch (basic residues) spans 58–70 (HTTKKPWRQKGTG).

It belongs to the universal ribosomal protein uL4 family. In terms of assembly, part of the 50S ribosomal subunit.

In terms of biological role, one of the primary rRNA binding proteins, this protein initially binds near the 5'-end of the 23S rRNA. It is important during the early stages of 50S assembly. It makes multiple contacts with different domains of the 23S rRNA in the assembled 50S subunit and ribosome. Its function is as follows. Forms part of the polypeptide exit tunnel. The sequence is that of Large ribosomal subunit protein uL4 from Polynucleobacter asymbioticus (strain DSM 18221 / CIP 109841 / QLW-P1DMWA-1) (Polynucleobacter necessarius subsp. asymbioticus).